Reading from the N-terminus, the 210-residue chain is 3-hexulose-6-phosphate synthase (210 aa).

It belongs to the HPS/KGPDC family. HPS subfamily.

It catalyses the reaction D-ribulose 5-phosphate + formaldehyde = D-arabino-hex-3-ulose 6-phosphate. It participates in one-carbon metabolism; formaldehyde assimilation via RuMP pathway; D-fructose 6-phosphate from D-ribulose 5-phosphate and formaldehyde: step 1/2. Catalyzes the condensation of ribulose 5-phosphate with formaldehyde to form 3-hexulose 6-phosphate. The chain is 3-hexulose-6-phosphate synthase from Staphylococcus haemolyticus (strain JCSC1435).